A 347-amino-acid chain; its full sequence is Melatonin receptor type 1B-B (347 aa).

The Extracellular portion of the chain corresponds to 1–36 (MPENIAFLTNSTDLGHVGRALGSSARPAWAIAVLAS). Asn10 carries N-linked (GlcNAc...) asparagine glycosylation. The chain crosses the membrane as a helical span at residues 37–57 (VLIFTTVVDVLGNLLVIISVF). The Cytoplasmic segment spans residues 58-72 (RNRKLRNAGNVFVVS). A helical membrane pass occupies residues 73 to 93 (LAFADLVVAFYPYPLVLYAIF). The Extracellular segment spans residues 94 to 105 (HDGWSLGETQCK). A disulfide bridge links Cys104 with Cys181. Residues 106 to 126 (ISGFLMGLSVIGSVFNITGIA) form a helical membrane-spanning segment. Topologically, residues 127–148 (INRYCYICHSFAYGRLYSFRNT) are cytoplasmic. The helical transmembrane segment at 149-169 (LLLVALIWALTVLAILPNFFV) threads the bilayer. The Extracellular segment spans residues 170 to 191 (GSLSYDPRVYSCTFTQTASSSY). A helical membrane pass occupies residues 192–212 (TVVVVVVHFLVPIAVVTFCYL). At 213–244 (RIWVLVIQVRRKVKSEERSRVRPSDLRNFVTM) the chain is on the cytoplasmic side. Residues 245–265 (FVVFVLFAICWAPLNLIGLVV) form a helical membrane-spanning segment. Topologically, residues 266–278 (AINPEVMAPRVPE) are extracellular. The helical transmembrane segment at 279 to 299 (WLFVVSYFMAYFNSCLNAIIY) threads the bilayer. At 300–347 (GLLNRNFRKEYVRIMTAVWIPRRFVTETSRAATDGMRSKPSPAINNNE) the chain is on the cytoplasmic side.

It belongs to the G-protein coupled receptor 1 family.

The protein localises to the cell membrane. Its function is as follows. High affinity receptor for melatonin. The activity of this receptor is mediated by pertussis toxin sensitive G proteins that inhibits adenylate cyclase activity. This Danio rerio (Zebrafish) protein is Melatonin receptor type 1B-B (mtnr1bb).